The chain runs to 120 residues: UPF0102 protein Daro_0503 (120 aa).

A disordered region spans residues methionine 1 to alanine 20.

The protein belongs to the UPF0102 family.

This Dechloromonas aromatica (strain RCB) protein is UPF0102 protein Daro_0503.